A 399-amino-acid polypeptide reads, in one-letter code: Developmentally-regulated G-protein 2 (399 aa).

Residues 63–288 enclose the OBG-type G domain; it reads GRVALIGFPS…LLARMWDEMG (226 aa). Residues 69-76, 115-119, and 246-249 each bind GTP; these read GFPSVGKS, DLPGI, and NKID. Positions 288–366 constitute a TGS domain; it reads GLVRVYSKPQ…EDEDVVQIVK (79 aa). Residues 372–399 form a disordered region; that stretch reads EGGRGRFKSHSNAPARIADREKKAPLKQ. Residues 388-399 are compositionally biased toward basic and acidic residues; it reads IADREKKAPLKQ.

The protein belongs to the TRAFAC class OBG-HflX-like GTPase superfamily. OBG GTPase family.

It localises to the cytoplasm. In terms of biological role, binds GDP and GTP, and has low GTPase activity. This is Developmentally-regulated G-protein 2 (DRG2) from Arabidopsis thaliana (Mouse-ear cress).